Consider the following 423-residue polypeptide: MFHRHLCKLCSKTPSAATLASPLGKLQEERGEGVAKDLKKDKQHRQIFLQKFRERLDSDTTGKNTLAGFIDLPEGISPTMAAVGPLKRGEEPLPPWLKMKVAKGVSRLPRFNSIRKSMREKRLATVCEEAKCPNIGECWGGDEEEGTATATIMVMGSHCTRGCRFCSVLTSRTPPPLDPDEPQKVANAVAEMGVDYIVMTMVDRDDLNDGGAAHVVRCVNAIKEKNPLLLLEALVGDFHGDLKLVETVALSPLSVYAHNIECVERITPNVRDRRASYRQSLKVLEHVNSFTKGAMLTKSSIMLGLGEKEEEVRQTLRDLRTAGVSAVTLGQYLQPARTRLKVSRYAHPKEFQMWEEEAMAMGFLYCASGPLVRSSYRAGEYYIKSLVKQRGAAATKSNTTTTTTNTASLAAATVTDSATLQGE.

[4Fe-4S] cluster-binding residues include C127, C132, C138, C159, C163, C166, and S375. Positions 142–364 (DEEEGTATAT…EEEAMAMGFL (223 aa)) constitute a Radical SAM core domain.

It belongs to the radical SAM superfamily. Lipoyl synthase family. [4Fe-4S] cluster serves as cofactor.

It is found in the mitochondrion. It carries out the reaction [[Fe-S] cluster scaffold protein carrying a second [4Fe-4S](2+) cluster] + N(6)-octanoyl-L-lysyl-[protein] + 2 oxidized [2Fe-2S]-[ferredoxin] + 2 S-adenosyl-L-methionine + 4 H(+) = [[Fe-S] cluster scaffold protein] + N(6)-[(R)-dihydrolipoyl]-L-lysyl-[protein] + 4 Fe(3+) + 2 hydrogen sulfide + 2 5'-deoxyadenosine + 2 L-methionine + 2 reduced [2Fe-2S]-[ferredoxin]. The protein operates within protein modification; protein lipoylation via endogenous pathway; protein N(6)-(lipoyl)lysine from octanoyl-[acyl-carrier-protein]: step 2/2. Catalyzes the radical-mediated insertion of two sulfur atoms into the C-6 and C-8 positions of the octanoyl moiety bound to the lipoyl domains of lipoate-dependent enzymes, thereby converting the octanoylated domains into lipoylated derivatives. This chain is Lipoyl synthase 1, mitochondrial, found in Trypanosoma cruzi (strain CL Brener).